Consider the following 286-residue polypeptide: Phosphatidylserine decarboxylase proenzyme (286 aa).

Active-site charge relay system; for autoendoproteolytic cleavage activity residues include Asp-90, His-147, and Ser-253. Ser-253 serves as the catalytic Schiff-base intermediate with substrate; via pyruvic acid; for decarboxylase activity. Ser-253 is modified (pyruvic acid (Ser); by autocatalysis).

This sequence belongs to the phosphatidylserine decarboxylase family. PSD-B subfamily. Prokaryotic type I sub-subfamily. As to quaternary structure, heterodimer of a large membrane-associated beta subunit and a small pyruvoyl-containing alpha subunit. It depends on pyruvate as a cofactor. Post-translationally, is synthesized initially as an inactive proenzyme. Formation of the active enzyme involves a self-maturation process in which the active site pyruvoyl group is generated from an internal serine residue via an autocatalytic post-translational modification. Two non-identical subunits are generated from the proenzyme in this reaction, and the pyruvate is formed at the N-terminus of the alpha chain, which is derived from the carboxyl end of the proenzyme. The autoendoproteolytic cleavage occurs by a canonical serine protease mechanism, in which the side chain hydroxyl group of the serine supplies its oxygen atom to form the C-terminus of the beta chain, while the remainder of the serine residue undergoes an oxidative deamination to produce ammonia and the pyruvoyl prosthetic group on the alpha chain. During this reaction, the Ser that is part of the protease active site of the proenzyme becomes the pyruvoyl prosthetic group, which constitutes an essential element of the active site of the mature decarboxylase.

It localises to the cell membrane. The enzyme catalyses a 1,2-diacyl-sn-glycero-3-phospho-L-serine + H(+) = a 1,2-diacyl-sn-glycero-3-phosphoethanolamine + CO2. Its pathway is phospholipid metabolism; phosphatidylethanolamine biosynthesis; phosphatidylethanolamine from CDP-diacylglycerol: step 2/2. In terms of biological role, catalyzes the formation of phosphatidylethanolamine (PtdEtn) from phosphatidylserine (PtdSer). In Pseudoalteromonas atlantica (strain T6c / ATCC BAA-1087), this protein is Phosphatidylserine decarboxylase proenzyme.